We begin with the raw amino-acid sequence, 124 residues long: Large ribosomal subunit protein bL19 (124 aa).

Belongs to the bacterial ribosomal protein bL19 family.

This protein is located at the 30S-50S ribosomal subunit interface and may play a role in the structure and function of the aminoacyl-tRNA binding site. The protein is Large ribosomal subunit protein bL19 of Zymomonas mobilis subsp. mobilis (strain ATCC 31821 / ZM4 / CP4).